The sequence spans 67 residues: MDNRLLEILVCPLCKGKLEYDRAAQELICHADKLAYPIRDGIPVMLADEARQSVPGRVIEPDAPAGN.

The protein belongs to the UPF0434 family.

The protein is UPF0434 protein RALTA_A0561 of Cupriavidus taiwanensis (strain DSM 17343 / BCRC 17206 / CCUG 44338 / CIP 107171 / LMG 19424 / R1) (Ralstonia taiwanensis (strain LMG 19424)).